We begin with the raw amino-acid sequence, 1098 residues long: Contactin-5 (1098 aa).

Positions M1 to A23 are cleaved as a signal peptide. Ig-like C2-type domains lie at P98–Q189, N195–S281, P299–Q384, P389–K473, P479–K568, and P570–S659. A disulfide bond links C122 and C172. N-linked (GlcNAc...) asparagine glycans are attached at residues N137 and N195. Cystine bridges form between C216–C268 and C321–C368. N-linked (GlcNAc...) asparagine glycosylation is found at N396, N448, and N539. Intrachain disulfides connect C410–C457, C502–C550, and C592–C649. Fibronectin type-III domains follow at residues P672–A770, A775–G872, A877–H971, and P976–G1066. Residues N778, N815, and N930 are each glycosylated (N-linked (GlcNAc...) asparagine). The interval G956 to W982 is disordered. N-linked (GlcNAc...) asparagine glycosylation occurs at N1001. A lipid anchor (GPI-anchor amidated serine) is attached at S1071. A propeptide spans A1072–W1098 (removed in mature form).

The protein belongs to the immunoglobulin superfamily. Contactin family. As to quaternary structure, interacts with PTPRG. Expressed in the nervous system. Preferentially expressed in the central auditory pathways.

The protein resides in the cell membrane. Functionally, contactins mediate cell surface interactions during nervous system development. Has some neurite outgrowth-promoting activity in the cerebral cortical neurons but not in hippocampal neurons. Involved in neuronal activity in the auditory system. This is Contactin-5 (Cntn5) from Mus musculus (Mouse).